Reading from the N-terminus, the 295-residue chain is Probable CBASS effector molecule IK1_05631 (295 aa).

4 helical membrane-spanning segments follow: residues 26-46, 56-76, 167-187, and 190-210; these read IFYAVRISISILIPILSISIY, SNTGVWFSVIGSIWLLIAYQI, ILLFTVSVLYLFLTIAFGFFV, and SMQEYIIKILLPSMSILIYGF.

The protein resides in the cell membrane. Functionally, effector protein of a CBASS antiviral system. CBASS (cyclic oligonucleotide-based antiphage signaling system) provides immunity against bacteriophage. The CD-NTase protein synthesizes cyclic nucleotides in response to infection; these serve as specific second messenger signals. The signals activate a diverse range of effectors, leading to bacterial cell death and thus abortive phage infection. A type I-B CBASS system. In terms of biological role, protects B.subtilis against phage infection. When IK1_05630 and IK1_05631 are introduced in B.subtilis BEST7003 there is 1000-fold protection against phage SBSphiC. Both genes are required for protection. Activation leads to bacterial cell lysis and death, which occurs before the phage has finished its replication cycle, thus protecting non-infected bacteria by aborting the phage infection and preventing its propagation. In Bacillus cereus (strain VD146), this protein is Probable CBASS effector molecule IK1_05631.